A 205-amino-acid chain; its full sequence is Ras-related protein RABC2b (205 aa).

GTP is bound at residue 20–27 (GDSGVGKS). Residues 41–49 (LAPTIGVDF) carry the Effector region motif. Residues 67–71 (DTAGQ), 127–130 (NKVD), and 157–158 (SA) contribute to the GTP site. 2 S-geranylgeranyl cysteine lipidation sites follow: Cys202 and Cys203.

Belongs to the small GTPase superfamily. Rab family.

It is found in the cell membrane. In terms of biological role, intracellular vesicle trafficking and protein transport. The protein is Ras-related protein RABC2b (RABC2B) of Arabidopsis thaliana (Mouse-ear cress).